An 816-amino-acid chain; its full sequence is MDEDEKDRAKRASRNKSEKKRRDQFNVLIKELSSMLPGNTRKMDKTTVLEKVIGFLQKHNEVSAQTEICDIQQDWKPSFLSNEEFTQLMLEALDGFVIVVTTDGSIIYVSDSITPLLGHLPADVMDQNLLNFLPEQEHSEVYKILSSHMLVTDSPSPEFLKSDNDLEFYCHLLRGSLNPKEFPTYEYIKFVGNFRSYNNVPSPSCNGFDNTLSRPCHVPLGKDVCFIATVRLATPQFLKEMCVADEPLEEFTSRHSLEWKFLFLDHRAPPIIGYLPFEVLGTSGYNYYHIDDLELLARCHQHLMQFGKGKSCCYRFLTKGQQWIWLQTHYYITYHQWNSKPEFIVCTHSVVSYADVRVERRQELALEDPPTEAMHPSAVKEKDSSLEPPQPFNALDMGASGLPSSPSPSASSRSSHKSSHTAMSEPTSTPTKLMAENSTTALPRPATLPQELPVQGLSQAATMPTALHSSASCDLTKQLLLQSLPQTGLQSPPAPVTQFSAQFSMFQTIKDQLEQRTRILQANIRWQQEELHKIQEQLCLVQDSNVQMFLQQPAVSLSFSSTQRPAAQQQLQQRPAAPSQPQLVVNTPLQGQITSTQVTNQHLLRESNVISAQGPKPMRSSQLLPASGRSLSSLPSQFSSTASVLPPGLSLTTIAPTPQDDSQCQPSPDFGHDRQLRLLLSQPIQPMMPGSCDARQPSEVSRTGRQVKYAQSQVMFPSPDSHPTNSSASTPVLLMGQAVLHPSFPASRPSPLQPAQAQQQPPPYLQAPTSLHSEQPDSLLLSTFSQQPGTLGYAATQSTPPQPPRPSRRVSRLSES.

The span at 1 to 10 (MDEDEKDRAK) shows a compositional bias: basic and acidic residues. Positions 1–21 (MDEDEKDRAKRASRNKSEKKR) are disordered. The interval 1-61 (MDEDEKDRAK…VIGFLQKHNE (61 aa)) is sufficient for heterodimer formation with BMAL1, E-box binding and for the effect of NADPH. A bHLH domain is found at 9–59 (AKRASRNKSEKKRRDQFNVLIKELSSMLPGNTRKMDKTTVLEKVIGFLQKH). One can recognise a PAS 1 domain in the interval 82–152 (NEEFTQLMLE…KILSSHMLVT (71 aa)). Heme b contacts are provided by histidine 119 and histidine 171. Positions 237 to 307 (FLKEMCVADE…RCHQHLMQFG (71 aa)) constitute a PAS 2 domain. Positions 311-354 (SCCYRFLTKGQQWIWLQTHYYITYHQWNSKPEFIVCTHSVVSYA) constitute a PAC domain. 4 disordered regions span residues 364 to 431 (LALE…STPT), 610 to 639 (ISAQGPKPMRSSQLLPASGRSLSSLPSQFS), 685 to 705 (QPMMPGSCDARQPSEVSRTGR), and 742 to 816 (PSFP…LSES). The span at 400–413 (SGLPSSPSPSASSR) shows a compositional bias: low complexity. Positions 420–431 (HTAMSEPTSTPT) are enriched in polar residues. Positions 623-639 (LLPASGRSLSSLPSQFS) are enriched in low complexity. A compositionally biased stretch (low complexity) spans 745-759 (PASRPSPLQPAQAQQ). Over residues 780–789 (LLSTFSQQPG) the composition is skewed to polar residues. Basic residues predominate over residues 806–816 (PSRRVSRLSES).

As to quaternary structure, component of the circadian clock oscillator which includes the CRY proteins, CLOCK or NPAS2, BMAL1 or BMAL2, CSNK1D and/or CSNK1E, TIMELESS and the PER proteins. Efficient DNA binding requires dimerization with another bHLH protein. Interacts with NCOA3, KAT2B and CREBBP. Forms a heterodimer with BMAL1 and this heterodimerization is required for E-box-dependent transactivation. Interacts with EP300. Requires heme as cofactor. As to expression, expressed in the retinal ganglion cells (at protein level). Expressed in the hypothalamic suprachiasmatic nuclei (SCN) of the brain. Also found in spinal cord, and to a lesser extent in colon, small intestine and uterus. Exhibits a diurnal variation in its expression in the brain.

The protein localises to the nucleus. Carbon monoxide (CO) and the redox state of the cell can modulate the transcriptional activity of the NPAS2-BMAL1 heterodimer. NADH and NADPH enhance the DNA-binding activity of the heterodimer whereas CO binds the heme group in NPAS2 and inhibits the DNA-binding activity of the heterodimer. In terms of biological role, transcriptional activator which forms a core component of the circadian clock. The circadian clock, an internal time-keeping system, regulates various physiological processes through the generation of approximately 24 hour circadian rhythms in gene expression, which are translated into rhythms in metabolism and behavior. It is derived from the Latin roots 'circa' (about) and 'diem' (day) and acts as an important regulator of a wide array of physiological functions including metabolism, sleep, body temperature, blood pressure, endocrine, immune, cardiovascular, and renal function. Consists of two major components: the central clock, residing in the suprachiasmatic nucleus (SCN) of the brain, and the peripheral clocks that are present in nearly every tissue and organ system. Both the central and peripheral clocks can be reset by environmental cues, also known as Zeitgebers (German for 'timegivers'). The predominant Zeitgeber for the central clock is light, which is sensed by retina and signals directly to the SCN. The central clock entrains the peripheral clocks through neuronal and hormonal signals, body temperature and feeding-related cues, aligning all clocks with the external light/dark cycle. Circadian rhythms allow an organism to achieve temporal homeostasis with its environment at the molecular level by regulating gene expression to create a peak of protein expression once every 24 hours to control when a particular physiological process is most active with respect to the solar day. Transcription and translation of core clock components (CLOCK, NPAS2, BMAL1, BMAL2, PER1, PER2, PER3, CRY1 and CRY2) plays a critical role in rhythm generation, whereas delays imposed by post-translational modifications (PTMs) are important for determining the period (tau) of the rhythms (tau refers to the period of a rhythm and is the length, in time, of one complete cycle). A diurnal rhythm is synchronized with the day/night cycle, while the ultradian and infradian rhythms have a period shorter and longer than 24 hours, respectively. Disruptions in the circadian rhythms contribute to the pathology of cardiovascular diseases, cancer, metabolic syndromes and aging. A transcription/translation feedback loop (TTFL) forms the core of the molecular circadian clock mechanism. Transcription factors, CLOCK or NPAS2 and BMAL1 or BMAL2, form the positive limb of the feedback loop, act in the form of a heterodimer and activate the transcription of core clock genes and clock-controlled genes (involved in key metabolic processes), harboring E-box elements (5'-CACGTG-3') within their promoters. The core clock genes: PER1/2/3 and CRY1/2 which are transcriptional repressors form the negative limb of the feedback loop and interact with the CLOCK|NPAS2-BMAL1|BMAL2 heterodimer inhibiting its activity and thereby negatively regulating their own expression. This heterodimer also activates nuclear receptors NR1D1/2 and RORA/B/G, which form a second feedback loop and which activate and repress BMAL1 transcription, respectively. The NPAS2-BMAL1 heterodimer positively regulates the expression of MAOA, F7 and LDHA and modulates the circadian rhythm of daytime contrast sensitivity by regulating the rhythmic expression of adenylate cyclase type 1 (ADCY1) in the retina. NPAS2 plays an important role in sleep homeostasis and in maintaining circadian behaviors in normal light/dark and feeding conditions and in the effective synchronization of feeding behavior with scheduled food availability. Regulates the gene transcription of key metabolic pathways in the liver and is involved in DNA damage response by regulating several cell cycle and DNA repair genes. Controls the circadian rhythm of NR0B2 expression by binding rhythmically to its promoter. Mediates the diurnal variation in the expression of GABARA1 receptor in the brain and contributes to the regulation of anxiety-like behaviors and GABAergic neurotransmission in the ventral striatum. In Mus musculus (Mouse), this protein is Neuronal PAS domain-containing protein 2 (Npas2).